The sequence spans 154 residues: CASP-like protein 5C2 (154 aa).

The Cytoplasmic portion of the chain corresponds to 1–17; that stretch reads MEHVPGSFGTSASFALR. The chain crosses the membrane as a helical span at residues 18-38; the sequence is FGQTIFSAASLIFMCFDFDFY. The Extracellular segment spans residues 39–41; sequence DFT. The chain crosses the membrane as a helical span at residues 42–62; that stretch reads TFCYLAMVMAIVTPWSILLAL. At 63–81 the chain is on the cytoplasmic side; sequence TDTYSVLVKLLPQELRVLS. A helical transmembrane segment spans residues 82–102; it reads IVFAGDFVLSFLSLGGACAVA. Topologically, residues 103-128 are extracellular; it reads SATELLASADGKICDGSLCIQYQVSA. A helical transmembrane segment spans residues 129 to 149; that stretch reads ALAFLCWFLLLASALFNFWSL. Residues 150–154 are Cytoplasmic-facing; the sequence is PSLYY.

The protein belongs to the Casparian strip membrane proteins (CASP) family. As to quaternary structure, homodimer and heterodimers.

It is found in the cell membrane. This chain is CASP-like protein 5C2, found in Arabidopsis thaliana (Mouse-ear cress).